The following is a 104-amino-acid chain: MAANPSGQGFQNKNRVAILAELDKEKRKLLMQNQSSTNHPGASIALTRSPLNKDFRDHAEQQHIAAQQKAALQHAHAHSSGYFITQDSAFGNLILPVLPRLEAE.

The protein belongs to the SOSS-C family. In terms of assembly, belongs to the multiprotein complex Integrator. Component of the SOSS complex, composed of SOSS-B (SOSS-B1/NABP2 or SOSS-B2/NABP1), SOSS-A/INTS3 and SOSS-C/INIP.

It localises to the nucleus. Component of the SOSS complex, a multiprotein complex that functions downstream of the MRN complex to promote DNA repair and G2/M checkpoint. The SOSS complex associates with single-stranded DNA at DNA lesions and influences diverse endpoints in the cellular DNA damage response including cell-cycle checkpoint activation, recombinational repair and maintenance of genomic stability. Required for efficient homologous recombination-dependent repair of double-strand breaks (DSBs). The polypeptide is SOSS complex subunit C (INIP) (Taeniopygia guttata (Zebra finch)).